Here is an 80-residue protein sequence, read N- to C-terminus: Conotoxin SmIVB (80 aa).

The first 21 residues, 1 to 21 (MGMRMMFTVFLLVVLATTVVS), serve as a signal peptide directing secretion. Residues 22 to 38 (IPSDRASDGRNAEVNER) constitute a propeptide that is removed on maturation. The residue at position 40 (proline 40) is a 4-hydroxyproline. An O-linked (HexNAc...) serine glycan is attached at serine 45. 4-hydroxyproline occurs at positions 55, 60, 61, 70, and 72. Serine 75 is subject to Serine amide. The propeptide occupies 76-80 (GRRNH).

It belongs to the conotoxin A superfamily. Contains 3 disulfide bonds. Expressed by the venom duct.

It localises to the secreted. Its function is as follows. Neurotoxin with probable activity on sodium channel. Induces intense repetitive firing of the frog neuromuscular junction, leading to a tetanic contracture in muscle fiber (spastic paralysis). In vivo, shows the same effect as the whole venom when injected on fish prey. This chain is Conotoxin SmIVB, found in Conus stercusmuscarum (Fly-specked cone).